A 98-amino-acid chain; its full sequence is Mitochondrial import inner membrane translocase subunit tim8 (98 aa).

The Twin CX3C motif signature appears at 44–67 (CWPKCIGNIGNKLDKSEEQCLQNC). Cystine bridges form between cysteine 44/cysteine 67 and cysteine 48/cysteine 63.

It belongs to the small Tim family. Heterohexamer; composed of 3 copies of TIM8 and 3 copies of TIM13, named soluble 70 kDa complex. Associates with the TIM22 complex, whose core is composed of TIM22 and TIM54. Interacts with the transmembrane regions of multi-pass transmembrane proteins in transit.

It is found in the mitochondrion inner membrane. Functionally, mitochondrial intermembrane chaperone that participates in the import and insertion of some multi-pass transmembrane proteins into the mitochondrial inner membrane. Also required for the transfer of beta-barrel precursors from the TOM complex to the sorting and assembly machinery (SAM complex) of the outer membrane. Acts as a chaperone-like protein that protects the hydrophobic precursors from aggregation and guide them through the mitochondrial intermembrane space. The TIM8-TIM13 complex is non essential and only mediates the import of few proteins, while the predominant TIM9-TIM10 70 kDa complex is crucial and mediates the import of much more proteins. This Schizosaccharomyces pombe (strain 972 / ATCC 24843) (Fission yeast) protein is Mitochondrial import inner membrane translocase subunit tim8 (tim8).